The sequence spans 151 residues: Small ribosomal subunit protein uS15 (151 aa).

The segment at 1-20 is disordered; that stretch reads MARLHSGKRGSSGSTRPLRT.

It belongs to the universal ribosomal protein uS15 family. Part of the 30S ribosomal subunit.

The polypeptide is Small ribosomal subunit protein uS15 (Methanococcus maripaludis (strain C5 / ATCC BAA-1333)).